Here is a 533-residue protein sequence, read N- to C-terminus: Flavin-containing monooxygenase 5 (533 aa).

Arg-5 is modified (dimethylated arginine). Residues 10–14 (GAGAS), Glu-33, and 41–42 (LW) contribute to the FAD site. Ser-54 carries the phosphoserine modification. A Phosphotyrosine modification is found at Tyr-56. At Ser-58 the chain carries Phosphoserine. 62 to 63 (NT) serves as a coordination point for FAD. An NADP(+)-binding site is contributed by 196 to 199 (SGGD). A Phosphoserine modification is found at Ser-280. Phosphothreonine is present on Thr-284. A Phosphoserine modification is found at Ser-401. A helical transmembrane segment spans residues 513–533 (LVTVRVLMLAVAFFAVILAYF).

Belongs to the FMO family. Requires FAD as cofactor. As to expression, expressed in liver (at protein level). Expressed in the mucosal epithelium of the gastrointestinal tract.

It localises to the microsome membrane. It is found in the endoplasmic reticulum membrane. It carries out the reaction N,N-dimethylaniline + NADPH + O2 + H(+) = N,N-dimethylaniline N-oxide + NADP(+) + H2O. It catalyses the reaction NADPH + O2 + H(+) = H2O2 + NADP(+). The enzyme catalyses heptan-2-one + NADPH + O2 + H(+) = pentyl acetate + NADP(+) + H2O. The catalysed reaction is octan-3-one + NADPH + O2 + H(+) = pentyl propanoate + NADP(+) + H2O. It carries out the reaction octan-3-one + NADPH + O2 + H(+) = ethyl hexanoate + NADP(+) + H2O. It catalyses the reaction hexan-3-one + NADPH + O2 + H(+) = ethyl butanoate + NADP(+) + H2O. The enzyme catalyses hexan-3-one + NADPH + O2 + H(+) = propyl propanoate + NADP(+) + H2O. The catalysed reaction is heptan-4-one + NADPH + O2 + H(+) = propyl butanoate + NADP(+) + H2O. It carries out the reaction (2E)-geranial + NADPH + O2 + H(+) = (1E)-2,6-dimethylhepta-1,5-dien-1-yl formate + NADP(+) + H2O. It catalyses the reaction sulcatone + NADPH + O2 + H(+) = 4-methylpent-3-en-1-yl acetate + NADP(+) + H2O. Its function is as follows. Acts as a Baeyer-Villiger monooxygenase on a broad range of substrates. Catalyzes the insertion of an oxygen atom into a carbon-carbon bond adjacent to a carbonyl, which converts ketones to esters. Active on diverse carbonyl compounds, whereas soft nucleophiles are mostly non- or poorly reactive. In contrast with other forms of FMO it is non- or poorly active on 'classical' substrates such as drugs, pesticides, and dietary components containing soft nucleophilic heteroatoms. Able to oxidize drug molecules bearing a carbonyl group on an aliphatic chain, such as nabumetone and pentoxifylline. Also, in the absence of substrates, shows slow but yet significant NADPH oxidase activity. Acts as a positive modulator of cholesterol biosynthesis as well as glucose homeostasis, promoting metabolic aging via pleiotropic effects. This is Flavin-containing monooxygenase 5 from Mus musculus (Mouse).